Reading from the N-terminus, the 138-residue chain is Large ribosomal subunit protein uL16 (138 aa).

Positions 1-16 (MLIPKRVKYRRQHRPT) are enriched in basic residues. The segment at 1–23 (MLIPKRVKYRRQHRPTRSGISKG) is disordered.

Belongs to the universal ribosomal protein uL16 family. In terms of assembly, part of the 50S ribosomal subunit.

In terms of biological role, binds 23S rRNA and is also seen to make contacts with the A and possibly P site tRNAs. This Corynebacterium glutamicum (strain R) protein is Large ribosomal subunit protein uL16.